The sequence spans 466 residues: Exodeoxyribonuclease 7 large subunit (466 aa).

The protein belongs to the XseA family. In terms of assembly, heterooligomer composed of large and small subunits.

It is found in the cytoplasm. It catalyses the reaction Exonucleolytic cleavage in either 5'- to 3'- or 3'- to 5'-direction to yield nucleoside 5'-phosphates.. In terms of biological role, bidirectionally degrades single-stranded DNA into large acid-insoluble oligonucleotides, which are then degraded further into small acid-soluble oligonucleotides. In Ruthia magnifica subsp. Calyptogena magnifica, this protein is Exodeoxyribonuclease 7 large subunit.